Here is a 164-residue protein sequence, read N- to C-terminus: Lipoprotein signal peptidase (164 aa).

Helical transmembrane passes span Trp12–Gln32, Trp70–Ser90, and Ala102–Val122. Residues Asp123 and Asp141 contribute to the active site. The helical transmembrane segment at Phe137–Leu157 threads the bilayer.

It belongs to the peptidase A8 family.

Its subcellular location is the cell inner membrane. It catalyses the reaction Release of signal peptides from bacterial membrane prolipoproteins. Hydrolyzes -Xaa-Yaa-Zaa-|-(S,diacylglyceryl)Cys-, in which Xaa is hydrophobic (preferably Leu), and Yaa (Ala or Ser) and Zaa (Gly or Ala) have small, neutral side chains.. Its pathway is protein modification; lipoprotein biosynthesis (signal peptide cleavage). In terms of biological role, this protein specifically catalyzes the removal of signal peptides from prolipoproteins. The chain is Lipoprotein signal peptidase from Shigella flexneri.